The following is a 460-amino-acid chain: Cysteine--tRNA ligase (460 aa).

A Zn(2+)-binding site is contributed by cysteine 27. Residues 29-39 carry the 'HIGH' region motif; it reads PTVYDLIHVGN. Cysteine 207, histidine 232, and glutamate 236 together coordinate Zn(2+). Residues 264 to 268 carry the 'KMSKS' region motif; sequence KMSKS. Residue lysine 267 participates in ATP binding.

The protein belongs to the class-I aminoacyl-tRNA synthetase family. As to quaternary structure, monomer. Zn(2+) is required as a cofactor.

It localises to the cytoplasm. The enzyme catalyses tRNA(Cys) + L-cysteine + ATP = L-cysteinyl-tRNA(Cys) + AMP + diphosphate. The protein is Cysteine--tRNA ligase (cysS) of Thermotoga maritima (strain ATCC 43589 / DSM 3109 / JCM 10099 / NBRC 100826 / MSB8).